A 204-amino-acid chain; its full sequence is LexA repressor (204 aa).

The H-T-H motif DNA-binding region spans 27 to 47 (VREIGEAVGLASSSTVHGHLA). Residues Ser126 and Lys164 each act as for autocatalytic cleavage activity in the active site.

The protein belongs to the peptidase S24 family. As to quaternary structure, homodimer.

The enzyme catalyses Hydrolysis of Ala-|-Gly bond in repressor LexA.. Represses a number of genes involved in the response to DNA damage (SOS response), including recA and lexA. In the presence of single-stranded DNA, RecA interacts with LexA causing an autocatalytic cleavage which disrupts the DNA-binding part of LexA, leading to derepression of the SOS regulon and eventually DNA repair. The polypeptide is LexA repressor (Listeria monocytogenes serotype 4b (strain CLIP80459)).